We begin with the raw amino-acid sequence, 71 residues long: MGGRRRKKRTNDTKHVRFAAAVEVWEADDIERKGPWEQVAVDRFRFQRRIASVEELLSTVLLRQKKLLEQQ.

2 important for host CHOP inhibition regions span residues 16–18 and 57–61; these read VRF and LSTVL.

It belongs to the asfivirus DP71L family. As to quaternary structure, interacts (via C-terminus) with host PPP1CB.

Its function is as follows. Interacts with the host phosphatase PP1 catalytic subunit (PPP1CB) and recruits it to dephosphorylate EIF2S1/eIF2alpha and therefore restores the host translation that has been shut-down by the host. Also inhibits the EIF2S1/eIF2alpha-ATF4-DDIT3/CHOP pathway. The protein is Protein DP71L of African swine fever virus (strain Badajoz 1971 Vero-adapted) (Ba71V).